We begin with the raw amino-acid sequence, 741 residues long: DNA ligase (741 aa).

NAD(+)-binding positions include 78-82, 127-128, and E161; these read DADYD and SL. K163 acts as the N6-AMP-lysine intermediate in catalysis. R184, E219, K335, and K359 together coordinate NAD(+). Zn(2+) is bound by residues C464, C467, C482, and C488. One can recognise a BRCT domain in the interval 662–741; that stretch reads VGDSPVAGKT…DAWRVLAGLA (80 aa).

Belongs to the NAD-dependent DNA ligase family. LigA subfamily. Mg(2+) serves as cofactor. It depends on Mn(2+) as a cofactor.

It catalyses the reaction NAD(+) + (deoxyribonucleotide)n-3'-hydroxyl + 5'-phospho-(deoxyribonucleotide)m = (deoxyribonucleotide)n+m + AMP + beta-nicotinamide D-nucleotide.. Its function is as follows. DNA ligase that catalyzes the formation of phosphodiester linkages between 5'-phosphoryl and 3'-hydroxyl groups in double-stranded DNA using NAD as a coenzyme and as the energy source for the reaction. It is essential for DNA replication and repair of damaged DNA. The chain is DNA ligase from Dinoroseobacter shibae (strain DSM 16493 / NCIMB 14021 / DFL 12).